Consider the following 1105-residue polypeptide: ATP-dependent DNA helicase MPH1 (1105 aa).

One can recognise a Helicase ATP-binding domain in the interval 94–261; it reads IVQRAFYDNL…EIIDNLSISK (168 aa). Residue 107–114 coordinates ATP; the sequence is LPTGLGKT. Positions 209–212 match the DEAH box motif; it reads DEAH. A Helicase C-terminal domain is found at 468-641; it reads SIERIGSNLR…LITLAQSNRI (174 aa). Disordered regions lie at residues 493 to 534, 684 to 708, 758 to 824, 850 to 880, and 918 to 953; these read EEAY…AQIK, KGKK…EKRF, IQSK…PKLG, LVTG…ECAP, and VSDD…FDEG. The span at 499-511 shows a compositional bias: basic residues; it reads KGKKGRTKGKATK. Residues 518 to 532 are compositionally biased toward basic and acidic residues; it reads TPERSTSRTSSEDAQ. Residues 684 to 705 show a composition bias toward basic residues; that stretch reads KGKKVTKSKSKSKSNSKSKKIE. The span at 764-787 shows a compositional bias: basic and acidic residues; it reads PVKENQSKRPNSEHICEEDSRQET. Over residues 788 to 799 the composition is skewed to low complexity; the sequence is ENNSNESNGSFE. Residues 927–943 show a composition bias toward polar residues; it reads DSINNQQLHKNKNLGST. A compositionally biased stretch (acidic residues) spans 944-953; that stretch reads SDDDDAFDEG.

This sequence belongs to the DEAD box helicase family. DEAH subfamily. FANCM sub-subfamily. Interacts with the MHF histone-fold complex to form the FANCM-MHF complex.

The protein resides in the nucleus. It carries out the reaction ATP + H2O = ADP + phosphate + H(+). Functionally, ATP-dependent DNA helicase involved in DNA damage repair by homologous recombination and in genome maintenance. Capable of unwinding D-loops. Plays a role in limiting crossover recombinants during mitotic DNA double-strand break (DSB) repair. Component of a FANCM-MHF complex which promotes gene conversion at blocked replication forks, probably by reversal of the stalled fork. This Debaryomyces hansenii (strain ATCC 36239 / CBS 767 / BCRC 21394 / JCM 1990 / NBRC 0083 / IGC 2968) (Yeast) protein is ATP-dependent DNA helicase MPH1.